The sequence spans 796 residues: DNA damage-responsive transcriptional repressor RPH1 (796 aa).

The JmjN domain maps to 14–55 (VPVFKPTYEQFEDFYAYCKAINKYGMKSGVVKVIPPKEWKDK). The JmjC domain occupies 193-355 (PEGLNVWNVA…IGKKAGKCHC (163 aa)). Thr399 bears the Phosphothreonine mark. A phosphoserine mark is found at Ser430, Ser459, Ser557, Ser561, Ser575, and Ser584. Residues 455–471 (KRISSFQEQPLNKLLKR) carry the Bipartite nuclear localization signal motif. Positions 599-692 (RQQHSQQHSF…DKEQGSSPLN (94 aa)) are disordered. The segment covering 601-621 (QHSQQHSFSTPSTVSNLSTSV) has biased composition (polar residues). The span at 629-640 (NDIKTPHPERPN) shows a compositional bias: basic and acidic residues. Position 652 is a phosphoserine (Ser652). Polar residues predominate over residues 654–669 (VETSKSNLILSKVAST). The segment covering 670–686 (RQEDSFTSRNDDLDKEQ) has biased composition (basic and acidic residues). A Phosphoserine modification is found at Ser689. The C2H2-type 1 zinc-finger motif lies at 709 to 732 (YICKECQRKFSSGHHLTRHKKSVH). Residues 738–763 (HSCPKCGKRFKRRDHVLQHLNKKIPC) form a C2H2-type 2; atypical zinc finger. A disordered region spans residues 774–796 (IMNPTVQPQDGKAAINQQSTPLN).

Post-translationally, RAD53-dependent phosphorylated in response to DNA damage.

It localises to the nucleus. Transcriptional repressor of photolyase PHR1. Recognizes and binds the sequence AG(4) in the upstream repressing sequence of PHR1. Derepresses PHR1 transcription when phosphorylated. This is DNA damage-responsive transcriptional repressor RPH1 (RPH1) from Saccharomyces cerevisiae (strain ATCC 204508 / S288c) (Baker's yeast).